Consider the following 171-residue polypeptide: tRNA-specific adenosine deaminase (171 aa).

The CMP/dCMP-type deaminase domain occupies 6 to 133; the sequence is EEQTYFMQEA…ERLNHRVQVE (128 aa). His57 contributes to the Zn(2+) binding site. Glu59 serves as the catalytic Proton donor. Zn(2+) is bound by residues Cys87 and Cys90.

It belongs to the cytidine and deoxycytidylate deaminase family. Homodimer. It depends on Zn(2+) as a cofactor.

The enzyme catalyses adenosine(34) in tRNA + H2O + H(+) = inosine(34) in tRNA + NH4(+). Catalyzes the deamination of adenosine to inosine at the wobble position 34 of tRNA(Arg2). The protein is tRNA-specific adenosine deaminase of Streptococcus pyogenes serotype M3 (strain ATCC BAA-595 / MGAS315).